Consider the following 131-residue polypeptide: Small ribosomal subunit protein uS8 (131 aa).

Belongs to the universal ribosomal protein uS8 family. Part of the 30S ribosomal subunit. Contacts proteins S5 and S12.

In terms of biological role, one of the primary rRNA binding proteins, it binds directly to 16S rRNA central domain where it helps coordinate assembly of the platform of the 30S subunit. In Hyphomonas neptunium (strain ATCC 15444), this protein is Small ribosomal subunit protein uS8.